The following is a 347-amino-acid chain: (RS)-norcoclaurine 6-O-methyltransferase (347 aa).

Gly-192, Asp-215, Asp-235, Met-236, and Lys-249 together coordinate S-adenosyl-L-methionine. Residue His-253 is the Proton acceptor of the active site.

The protein belongs to the class I-like SAM-binding methyltransferase superfamily. Cation-independent O-methyltransferase family. COMT subfamily. As to quaternary structure, homodimer.

The catalysed reaction is norcoclaurine + S-adenosyl-L-methionine = coclaurine + S-adenosyl-L-homocysteine + H(+). It functions in the pathway alkaloid biosynthesis; (S)-reticuline biosynthesis; (S)-reticuline from (S)-norcoclaurine: step 1/4. In terms of biological role, catalyzes the transfer of the S-methyl group of S-adenosyl-L-methionine (AdoMet) to the 6-hydroxyl group of norcoclaurine to form coclaurine. The chain is (RS)-norcoclaurine 6-O-methyltransferase from Coptis japonica (Japanese goldthread).